We begin with the raw amino-acid sequence, 886 residues long: MAGNIVKWWKHKILGGYKQFTVLQECATDSEELIYPGRAPSACSAPPDLLLTSDREQMLKVKSSASTGSGTGQTKTSFQHSHHHHHHGHHHQSPSSNGHNHSGTSHQQQQQQQHHHHHKSQKDAFRKCTNGKAGGGNATAGGASGAGATNTINTTAATIRSDPDRVRLEEFTCDVSLEDGKKPQPLQFSFTLYDLDGHGKITKDDIAGIVSTIYESIGKSVVVPHYGSKTINVRLTVSPDGKTATTKPASAAVKKAIITPRRRYRSRKLISDDDGSDTSENCPRLLRNRTAATAVTNNGETANNNQAALQNQQQQQQQQHHHHHHHHSNGSSGKLKESNLSKATALAGDNQVNRSIGLSNSSEGSSAVGQLLVEAYHKNNLSPGAANAGAGKGVLNNAPNATKSKANENVYESINNLKCCNLQQQQQQHTASNNTSLQTTASSLPVTATGLNQSTTSTAALICHDCVDGGAPTTTLLPPLSTLETVVIPAPSAGVTGRAKRKLVRKTRASRKTAIAAKMMSEDFARRPRARSLSVGNENCYENVIGRMAAAQEECWKSSLCRRELIEIIRESMVKNSLCFQPNRRKEHHRLAAAVGATRSTQPTPVKLSTALLNQQYPNLSAEQKLTRSINQVEQWLDHRSPKLVPKVKLADDMQLQRTVVSRPLKRSKSKEELTPSNLLLLENLKISEDIAEIAVVTPKKVYNKESLIASATKKNIKTHHQHQHSPSRQPTAVPTVAIGAEKPSAPLTVVNKQSIPVGDAQLVQLQYGSVPINADPSECENLIRMSDDGEDVEQHQHQQHQQQQQTAPMAATKHSYRHHQPQSRSQPQSPQHHQHHHQQEPRYCGSGRAHSVSSASAASTTAVHRYVHEHIHHHYHHFENDPDES.

Positions 62–79 (KSSASTGSGTGQTKTSFQ) are enriched in low complexity. Residues 62–149 (KSSASTGSGT…AGGASGAGAT (88 aa)) are disordered. Over residues 80–92 (HSHHHHHHGHHHQ) the composition is skewed to basic residues. The span at 93–112 (SPSSNGHNHSGTSHQQQQQQ) shows a compositional bias: low complexity. Over residues 132-145 (KAGGGNATAGGASG) the composition is skewed to gly residues. An EF-hand domain is found at 181–216 (KKPQPLQFSFTLYDLDGHGKITKDDIAGIVSTIYES). Disordered stretches follow at residues 267–286 (RKLI…PRLL) and 307–338 (AALQ…LKES). Over residues 319-328 (QHHHHHHHHS) the composition is skewed to basic residues. A required for nuclear localization and inhibition of Wnt signaling region spans residues 554–583 (ECWKSSLCRRELIEIIRESMVKNSLCFQPN). Residues 789 to 861 (DGEDVEQHQH…SVSSASAAST (73 aa)) form a disordered region. Low complexity-rich tracts occupy residues 823-832 (QSRSQPQSPQ) and 846-861 (GSGR…AAST).

It belongs to the NKD family.

It localises to the cell membrane. It is found in the cytoplasm. Its subcellular location is the nucleus. Its function is as follows. Cell autonomous antagonist of the canonical Wnt signaling pathway. May activate a second Wnt signaling pathway that controls planar cell polarity. Required for neuroblast specification. This chain is Protein naked cuticle homolog (nkd), found in Anopheles gambiae (African malaria mosquito).